A 184-amino-acid chain; its full sequence is Cell number regulator 5 (184 aa).

The helical transmembrane segment at 91–111 (MLWGLLTSLCCVFTGGLVLAV) threads the bilayer. Residues 162–184 (RTGSGSSPAPNVTPPPVQTMDEL) form a disordered region.

Belongs to the cornifelin family. In terms of tissue distribution, expressed in roots, leaves, stalks, immature ears, endosperm and pollen.

Its subcellular location is the membrane. In Zea mays (Maize), this protein is Cell number regulator 5 (CNR5).